Reading from the N-terminus, the 119-residue chain is Beta-2-microglobulin (119 aa).

The signal sequence occupies residues M1–A20. The 90-residue stretch at P25–K114 folds into the Ig-like C1-type domain. An intrachain disulfide couples C45 to C100.

Belongs to the beta-2-microglobulin family. Heterodimer of an alpha chain and a beta chain. Beta-2-microglobulin is the beta-chain of major histocompatibility complex class I molecules.

It is found in the secreted. In terms of biological role, component of the class I major histocompatibility complex (MHC). Involved in the presentation of peptide antigens to the immune system. The protein is Beta-2-microglobulin (B2M) of Cebus albifrons (White-fronted capuchin).